The following is a 408-amino-acid chain: Acetate kinase (408 aa).

N7 contacts Mg(2+). ATP is bound at residue K14. R91 is a binding site for substrate. Catalysis depends on D148, which acts as the Proton donor/acceptor. ATP-binding positions include 208–212 and 283–285; these read HLGNG and DLR. E388 contacts Mg(2+).

Belongs to the acetokinase family. Homodimer. Mg(2+) is required as a cofactor. It depends on Mn(2+) as a cofactor.

The protein resides in the cytoplasm. It carries out the reaction acetate + ATP = acetyl phosphate + ADP. Its pathway is metabolic intermediate biosynthesis; acetyl-CoA biosynthesis; acetyl-CoA from acetate: step 1/2. Its function is as follows. Catalyzes the formation of acetyl phosphate from acetate and ATP. Can also catalyze the reverse reaction. The sequence is that of Acetate kinase from Borrelia hermsii (strain HS1 / DAH).